The primary structure comprises 65 residues: uncharacterized protein (65 aa).

The protein resides in the plastid. It is found in the chloroplast. This is an uncharacterized protein from Guillardia theta (Cryptophyte).